The primary structure comprises 214 residues: Pyridoxine/pyridoxamine 5'-phosphate oxidase (214 aa).

Residues 8–11 (RINY) and K66 contribute to the substrate site. FMN is bound by residues 61–66 (RIVLIK), 76–77 (FT), R82, K83, and Q105. The substrate site is built by Y123, R127, and S131. FMN contacts are provided by residues 140-141 (QS) and W184. 190–192 (RLH) contacts substrate. Residue R194 participates in FMN binding.

Belongs to the pyridoxamine 5'-phosphate oxidase family. In terms of assembly, homodimer. The cofactor is FMN.

The catalysed reaction is pyridoxamine 5'-phosphate + O2 + H2O = pyridoxal 5'-phosphate + H2O2 + NH4(+). The enzyme catalyses pyridoxine 5'-phosphate + O2 = pyridoxal 5'-phosphate + H2O2. The protein operates within cofactor metabolism; pyridoxal 5'-phosphate salvage; pyridoxal 5'-phosphate from pyridoxamine 5'-phosphate: step 1/1. It participates in cofactor metabolism; pyridoxal 5'-phosphate salvage; pyridoxal 5'-phosphate from pyridoxine 5'-phosphate: step 1/1. Functionally, catalyzes the oxidation of either pyridoxine 5'-phosphate (PNP) or pyridoxamine 5'-phosphate (PMP) into pyridoxal 5'-phosphate (PLP). In Burkholderia lata (strain ATCC 17760 / DSM 23089 / LMG 22485 / NCIMB 9086 / R18194 / 383), this protein is Pyridoxine/pyridoxamine 5'-phosphate oxidase.